The chain runs to 1123 residues: Leucine-rich repeat receptor-like protein kinase PEPR1 (1123 aa).

The signal sequence occupies residues 1–28 (MKNLGGLFKILLLFFCLFLSTHIISVSC). Residues 29–769 (LNSDGLTLLS…SRKSGLSTWQ (741 aa)) lie on the Extracellular side of the membrane. An LRR 1 repeat occupies 31-53 (SDGLTLLSLLKHLDRVPPQVTST). N-linked (GlcNAc...) asparagine glycans are attached at residues asparagine 57, asparagine 81, asparagine 110, and asparagine 121. LRR repeat units follow at residues 74–98 (SKNV…IGEL), 99–122 (KSLQ…LGNC), 124–145 (KLAT…TLDS), 146–170 (LKRL…LFRI), 171–194 (PKLQ…IGDA), 196–218 (ELVE…IGNS), and 219–243 (SSLQ…NLLG). 2 N-linked (GlcNAc...) asparagine glycosylation sites follow: asparagine 182 and asparagine 217. N-linked (GlcNAc...) asparagine glycans are attached at residues asparagine 244, asparagine 252, asparagine 289, asparagine 302, asparagine 316, asparagine 321, and asparagine 337. 20 LRR repeats span residues 245–266 (LTTL…SPNC), 267–290 (KNLL…LGNC), 292–314 (SLDA…LGML), 315–338 (KNLT…LGNC), 340–362 (SLNL…LGKL), 363–386 (RKLE…IWKS), 388–410 (SLTQ…MTEM), 412–434 (KLKI…LGVN), 435–458 (SSLE…LCHG), 459–482 (RKLR…IGHC), 484–505 (TIRR…FSQD), 506–529 (HSLS…LGSC), 530–553 (KNLS…LGNL), 554–577 (QNLG…LSNC), 579–600 (SLER…NFSN), 601–625 (WKGL…LPEL), 626–650 (KKLS…GLIE), 652–674 (LIYD…LGDL), 675–696 (IKLT…VLKG), and 697–721 (LTSL…LEGQ). Residues asparagine 398, asparagine 420, and asparagine 434 are each glycosylated (N-linked (GlcNAc...) asparagine). Asparagine 494 carries N-linked (GlcNAc...) asparagine glycosylation. N-linked (GlcNAc...) asparagine glycosylation is found at asparagine 531, asparagine 536, asparagine 560, asparagine 591, and asparagine 597. 2 N-linked (GlcNAc...) asparagine glycosylation sites follow: asparagine 681 and asparagine 686. The N-linked (GlcNAc...) asparagine glycan is linked to asparagine 745. Residues 770–790 (IVLIAVLSSLLVLVVVLALVF) form a helical membrane-spanning segment. Residues 791–1123 (ICLRRRKGRP…ARSCSSDSVR (333 aa)) are Cytoplasmic-facing. Threonine 824 is subject to Phosphothreonine. Residues 827-1115 (LNEKYTIGRG…LLEDVKHLAR (289 aa)) enclose the Protein kinase domain. Residues 833 to 841 (IGRGAHGIV) and lysine 855 contribute to the ATP site. A phosphotyrosine mark is found at tyrosine 901 and tyrosine 941. The active-site Proton acceptor is aspartate 954. Position 995 is a phosphotyrosine (tyrosine 995).

Belongs to the protein kinase superfamily. Ser/Thr protein kinase family. In terms of assembly, interacts with PEP1 and BAK1. Interacts with BIK1 and PBL1. In terms of processing, N-glycosylated.

Its subcellular location is the cell membrane. The enzyme catalyses L-seryl-[protein] + ATP = O-phospho-L-seryl-[protein] + ADP + H(+). It carries out the reaction L-threonyl-[protein] + ATP = O-phospho-L-threonyl-[protein] + ADP + H(+). Functionally, acts as a receptor for PEP defense peptides. Unlike typical immune receptors, senses an endogenous elicitor that potentiates pathogen-associated molecular pattern (PAMP)-inducible plant responses. Involved in PAMP-triggered immunity (PTI) signaling. Interacts with and phosphorylates the kinase BIK1, a central rate-limiting kinase in PTI signaling. The polypeptide is Leucine-rich repeat receptor-like protein kinase PEPR1 (PEPR1) (Arabidopsis thaliana (Mouse-ear cress)).